Reading from the N-terminus, the 221-residue chain is Peptide methionine sulfoxide reductase MsrA (221 aa).

Cysteine 54 is a catalytic residue.

It belongs to the MsrA Met sulfoxide reductase family.

The enzyme catalyses L-methionyl-[protein] + [thioredoxin]-disulfide + H2O = L-methionyl-(S)-S-oxide-[protein] + [thioredoxin]-dithiol. It carries out the reaction [thioredoxin]-disulfide + L-methionine + H2O = L-methionine (S)-S-oxide + [thioredoxin]-dithiol. Has an important function as a repair enzyme for proteins that have been inactivated by oxidation. Catalyzes the reversible oxidation-reduction of methionine sulfoxide in proteins to methionine. The chain is Peptide methionine sulfoxide reductase MsrA from Methylobacterium nodulans (strain LMG 21967 / CNCM I-2342 / ORS 2060).